A 525-amino-acid chain; its full sequence is MDLKTFGGRRNFVFRNWAGIYSSRPEWYFQPSSVDEVVEIVKAAKLKNKTIVTVGSGHSPSNMCVTDEWMMNLDKMNKLLDFVENEDKTYADVTIQGGTRLYKIHKILREKGYAMQSLGSISEQSIGGIISTGTHGSSPFHGLVSSTIVNLTVVNGKGEVLFLDEKSNPEVFRAATLSLGKIGIIVGATVRVVPAFNIKSTQEVIKFETLLEKWDSLWTSSEFIRIWWYPYTRKCILWRGVKTNEPQTKSRYSWWGSTLGRFFYQTLLFISTKIYPPLTPYVERFVFRRQYGEVETLGKGDVAIEDSVTGFNMDCLFSQFVDEWGCPMDNGLEVLRSLDHSIAQAAANKDFYVHVPVEVRCANTTLPKEQPETSFRSNTSRGPVYGNLLRPYLDNTPSQCSYAPIHSVTNSQLTLYINATIYRPFHTNAPIHKWFTLFEDTMSAAGGKPHWAKNFLGSTSFAQGQVKAEGQYQDYEMRGMATRVKEWYGSDLETFKKVRREQDPDNIFLANKQWALINGIIDENE.

In terms of domain architecture, FAD-binding PCMH-type spans Ile20 to Ala195. His58 carries the post-translational modification Pros-8alpha-FAD histidine.

Belongs to the oxygen-dependent FAD-linked oxidoreductase family. It depends on FAD as a cofactor.

It localises to the mitochondrion membrane. The enzyme catalyses D-arabinono-1,4-lactone + O2 = dehydro-D-arabinono-1,4-lactone + H2O2 + H(+). It functions in the pathway cofactor biosynthesis; D-erythroascorbate biosynthesis; dehydro-D-arabinono-1,4-lactone from D-arabinose: step 2/2. This Candida glabrata (strain ATCC 2001 / BCRC 20586 / JCM 3761 / NBRC 0622 / NRRL Y-65 / CBS 138) (Yeast) protein is D-arabinono-1,4-lactone oxidase (ALO1).